Here is a 776-residue protein sequence, read N- to C-terminus: Calcium-independent phospholipase A2-gamma (776 aa).

Composition is skewed to basic and acidic residues over residues 226–238 (RQLQ…EESK) and 307–331 (LKSD…ICKD). Disordered regions lie at residues 226 to 274 (RQLQ…EALP) and 306 to 331 (KLKS…ICKD). Residues 439-634 (LAIDGGGTRG…LLNNPSALAL (196 aa)) enclose the PNPLA domain. The GXGXXG motif lies at 443–448 (GGGTRG). The helical transmembrane segment at 469-489 (LFDYICGVSTGAILAFMLGLF) threads the bilayer. The GXSXG motif lies at 475 to 479 (GVSTG). Residue serine 477 is the Nucleophile of the active site. The Proton acceptor role is filled by aspartate 621. The DGA/G motif lies at 621–623 (DGG). The residue at position 730 (lysine 730) is an N6-succinyllysine.

The protein resides in the endoplasmic reticulum membrane. The protein localises to the microsome membrane. It localises to the mitochondrion membrane. It is found in the peroxisome membrane. It carries out the reaction a 1,2-diacyl-sn-glycero-3-phosphocholine + H2O = a 1-acyl-sn-glycero-3-phosphocholine + a fatty acid + H(+). The enzyme catalyses a 1,2-diacyl-sn-glycero-3-phosphocholine + H2O = a 2-acyl-sn-glycero-3-phosphocholine + a fatty acid + H(+). The catalysed reaction is a 1,2-diacyl-sn-glycero-3-phosphoethanolamine + H2O = a 1-acyl-sn-glycero-3-phosphoethanolamine + a fatty acid + H(+). It catalyses the reaction a 1-O-(1Z-alkenyl)-2-acyl-sn-glycero-3-phosphocholine + H2O = a 1-O-(1Z-alkenyl)-sn-glycero-3-phosphocholine + a fatty acid + H(+). It carries out the reaction a 1-acyl-sn-glycero-3-phosphocholine + H2O = sn-glycerol 3-phosphocholine + a fatty acid + H(+). The enzyme catalyses 1-acyl-2-(9Z,12Z)-octadecadienoyl-sn-glycero-3-phosphocholine + H2O = a 1-acyl-sn-glycero-3-phosphocholine + (9Z,12Z)-octadecadienoate + H(+). The catalysed reaction is 1-acyl-2-(5Z,8Z,11Z,14Z-eicosatetraenoyl)-sn-glycero-3-phosphocholine + H2O = a 1-acyl-sn-glycero-3-phosphocholine + (5Z,8Z,11Z,14Z)-eicosatetraenoate + H(+). It catalyses the reaction 1-hexadecanoyl-2-(5Z,8Z,11Z,14Z-eicosatetraenoyl)-sn-glycero-3-phosphocholine + H2O = 1-hexadecanoyl-sn-glycero-3-phosphocholine + (5Z,8Z,11Z,14Z)-eicosatetraenoate + H(+). It carries out the reaction 1-octadecanoyl-2-(9Z-octadecenoyl)-sn-glycero-3-phosphocholine + H2O = 1-octadecanoyl-sn-glycero-3-phosphocholine + (9Z)-octadecenoate + H(+). The enzyme catalyses 1-hexadecanoyl-2-(9Z-octadecenoyl)-sn-glycero-3-phosphocholine + H2O = 1-hexadecanoyl-sn-glycero-3-phosphocholine + (9Z)-octadecenoate + H(+). The catalysed reaction is 1-hexadecanoyl-2-(9Z,12Z-octadecadienoyl)-sn-glycero-3-phosphocholine + H2O = (9Z,12Z)-octadecadienoate + 1-hexadecanoyl-sn-glycero-3-phosphocholine + H(+). It catalyses the reaction 1-acyl-2-(9Z,12Z)-octadecadienoyl-sn-glycero-3-phosphoethanolamine + H2O = a 1-acyl-sn-glycero-3-phosphoethanolamine + (9Z,12Z)-octadecadienoate + H(+). It carries out the reaction 1-acyl-2-(5Z,8Z,11Z,14Z)-eicosatetraenoyl-sn-glycero-3-phosphoethanolamine + H2O = a 1-acyl-sn-glycero-3-phosphoethanolamine + (5Z,8Z,11Z,14Z)-eicosatetraenoate + H(+). The enzyme catalyses 1-hexadecanoyl-2-(5Z,8Z,11Z,14Z-eicosatetraenoyl)-sn-glycero-3-phosphoethanolamine + H2O = 1-hexadecanoyl-sn-glycero-3-phosphoethanolamine + (5Z,8Z,11Z,14Z)-eicosatetraenoate + H(+). The catalysed reaction is 1-hexadecanoyl-2-(5Z,8Z,11Z,14Z-eicosatetraenoyl)-sn-glycero-3-phosphocholine + H2O = 2-(5Z,8Z,11Z,14Z)-eicosatetraenoyl-sn-glycero-3-phosphocholine + hexadecanoate + H(+). It catalyses the reaction 1-octadecanoyl-2-(9Z-octadecenoyl)-sn-glycero-3-phosphocholine + H2O = 2-(9Z-octadecenoyl)-sn-glycero-3-phosphocholine + octadecanoate + H(+). It carries out the reaction 1-hexadecanoyl-2-(4Z,7Z,10Z,13Z,16Z,19Z-docosahexaenoyl)-sn-glycero-3-phosphocholine + H2O = 2-(4Z,7Z,10Z,13Z,16Z,19Z-docosahexaenoyl)-sn-glycero-3-phosphocholine + hexadecanoate + H(+). The enzyme catalyses 1-O-(1Z)-hexadecenyl-2 (5Z,8Z,11Z,14Z)-eicosatetraenoyl-sn-glycero-3-phosphocholine + H2O = 1-(1Z-hexadecenyl)-sn-glycero-3-phosphocholine + (5Z,8Z,11Z,14Z)-eicosatetraenoate + H(+). The catalysed reaction is 1-O-(1Z-hexadecenyl)-2-(9Z-octadecenoyl)-sn-glycero-3-phosphocholine + H2O = 1-(1Z-hexadecenyl)-sn-glycero-3-phosphocholine + (9Z)-octadecenoate + H(+). It catalyses the reaction 1-hexadecanoyl-sn-glycero-3-phosphocholine + H2O = sn-glycerol 3-phosphocholine + hexadecanoate + H(+). It carries out the reaction 1',3'-bis-[1,2-di-(9Z,12Z-octadecadienoyl)-sn-glycero-3-phospho]-glycerol + H2O = 1'-[1,2-di-(9Z,12Z-octadecadienoyl)-sn-glycero-3-phospho]-3'-[1-(9Z,12Z-octadecadienoyl)-sn-glycero-3-phospho]-glycerol + (9Z,12Z)-octadecadienoate + H(+). The enzyme catalyses 1'-[1-acyl-2-(9-hydroxy-(10E,12Z)-octadecadienoyl)-sn-glycero-3-phospho]-3'-[1,2-diacyl-sn-glycero-3-phospho]-glycerol + H2O = 9-hydroxy-(10E,12Z)-octadecadienoate + 1'-[1,2-diacyl-sn-glycero-3-phospho],3'-[1-acyl-sn-glycero-3-phospho]-glycerol + H(+). It functions in the pathway phospholipid metabolism. Its activity is regulated as follows. Calcium-independent phospholipase. Functionally, calcium-independent and membrane-bound phospholipase, that catalyzes the esterolytic cleavage of fatty acids from glycerophospholipids to yield free fatty acids and lysophospholipids, hence regulating membrane physical properties and the release of lipid second messengers and growth factors. Hydrolyzes phosphatidylethanolamine, phosphatidylcholine and probably phosphatidylinositol with a possible preference for the former. Has also a broad substrate specificity in terms of fatty acid moieties, hydrolyzing saturated and mono-unsaturated fatty acids at nearly equal rates from either the sn-1 or sn-2 position in diacyl phosphatidylcholine. However, has a weak activity toward polyunsaturated fatty acids at the sn-2 position, and thereby favors the production of 2-arachidonoyl lysophosphatidylcholine, a key branch point metabolite in eicosanoid signaling. On the other hand, can produce arachidonic acid from the sn-1 position of diacyl phospholipid and from the sn-2 position of arachidonate-containing plasmalogen substrates. Therefore, plays an important role in the mobilization of arachidonic acid in response to cellular stimuli and the generation of lipid second messengers. Can also hydrolyze lysophosphatidylcholine. In the mitochondrial compartment, catalyzes the hydrolysis and release of oxidized aliphatic chains from cardiolipin and integrates mitochondrial bioenergetics and signaling. It is essential for maintaining efficient bioenergetic mitochondrial function through tailoring mitochondrial membrane lipid metabolism and composition. This chain is Calcium-independent phospholipase A2-gamma, found in Rattus norvegicus (Rat).